Here is a 323-residue protein sequence, read N- to C-terminus: Glyoxylate/hydroxypyruvate reductase B (323 aa).

The segment at 37-62 (AEHGGAGARRRHDRLQQHGGSSAAGE) is disordered. Catalysis depends on residues Arg236 and Glu265. The active-site Proton donor is the His284.

Belongs to the D-isomer specific 2-hydroxyacid dehydrogenase family. GhrB subfamily. Homodimer.

The protein localises to the cytoplasm. The enzyme catalyses glycolate + NADP(+) = glyoxylate + NADPH + H(+). The catalysed reaction is (R)-glycerate + NAD(+) = 3-hydroxypyruvate + NADH + H(+). It carries out the reaction (R)-glycerate + NADP(+) = 3-hydroxypyruvate + NADPH + H(+). Functionally, catalyzes the NADPH-dependent reduction of glyoxylate and hydroxypyruvate into glycolate and glycerate, respectively. The polypeptide is Glyoxylate/hydroxypyruvate reductase B (tkrA) (Enterobacter agglomerans (Erwinia herbicola)).